Consider the following 123-residue polypeptide: Ribonuclease P protein component 1 (123 aa).

The tract at residues 73–93 is disordered; sequence PDNGVGTAFKPAGGETRQTTG.

The protein belongs to the eukaryotic/archaeal RNase P protein component 1 family. Consists of a catalytic RNA component and at least 4-5 protein subunits.

The protein localises to the cytoplasm. The catalysed reaction is Endonucleolytic cleavage of RNA, removing 5'-extranucleotides from tRNA precursor.. In terms of biological role, part of ribonuclease P, a protein complex that generates mature tRNA molecules by cleaving their 5'-ends. In Halobacterium salinarum (strain ATCC 29341 / DSM 671 / R1), this protein is Ribonuclease P protein component 1.